The primary structure comprises 323 residues: Ankyrin repeat and SOCS box protein 11 (323 aa).

ANK repeat units lie at residues Ala64–Leu93, Asn97–Gly126, His130–Phe159, His162–His191, Gln195–His224, and Trp227–Arg256. Residues Val274–Gln323 form the SOCS box domain.

The protein belongs to the ankyrin SOCS box (ASB) family. In terms of assembly, substrate-recognition component of the ECS(ASB11) complex, composed of ASB11, CUL5, ELOB, ELOC and RNF7/RBX2.

Its subcellular location is the endoplasmic reticulum. It functions in the pathway protein modification; protein ubiquitination. In terms of biological role, substrate-recognition component of a cullin-5-RING E3 ubiquitin-protein ligase complex (ECS complex, also named CRL5 complex), which mediates the ubiquitination and subsequent proteasomal degradation of target proteins, such as BIK, DIRAS2 and RPN1. The ECS(ASB11) complex acts as a regulator of the endoplasmic reticulum unfolded protein response by mediating ubiquitination and degradation of BIK. This chain is Ankyrin repeat and SOCS box protein 11 (ASB11), found in Pongo abelii (Sumatran orangutan).